We begin with the raw amino-acid sequence, 301 residues long: Methionyl-tRNA formyltransferase (301 aa).

110-113 contributes to the (6S)-5,6,7,8-tetrahydrofolate binding site; the sequence is SLLP.

Belongs to the Fmt family.

It catalyses the reaction L-methionyl-tRNA(fMet) + (6R)-10-formyltetrahydrofolate = N-formyl-L-methionyl-tRNA(fMet) + (6S)-5,6,7,8-tetrahydrofolate + H(+). Its function is as follows. Attaches a formyl group to the free amino group of methionyl-tRNA(fMet). The formyl group appears to play a dual role in the initiator identity of N-formylmethionyl-tRNA by promoting its recognition by IF2 and preventing the misappropriation of this tRNA by the elongation apparatus. This is Methionyl-tRNA formyltransferase from Anaplasma phagocytophilum (strain HZ).